The following is a 208-amino-acid chain: MTGILAVQGAFAEHAAMLDHLGAPWKLLRAAEDFDDSIDRVILPGGESTTQGKLLRSTGLFEPIAEHIAAGKPVFGTCAGMILLARKLDNDDNVYFGALDAVVRRNAYGRQLGSFAATADFGSSSGDSAVVVAPGEHVPQDAPADIVLKDFPLVFIRGPFVAEVGPAATVETSVDGNVVGLRQGKILATAFHPELTDDTRIHELFLSL.

46 to 48 (GES) serves as a coordination point for L-glutamine. Residue C78 is the Nucleophile of the active site. L-glutamine is bound by residues R105 and 156–157 (IR). Residues H192 and E194 each act as charge relay system in the active site.

This sequence belongs to the glutaminase PdxT/SNO family. In terms of assembly, in the presence of PdxS, forms a dodecamer of heterodimers. Only shows activity in the heterodimer.

The catalysed reaction is aldehydo-D-ribose 5-phosphate + D-glyceraldehyde 3-phosphate + L-glutamine = pyridoxal 5'-phosphate + L-glutamate + phosphate + 3 H2O + H(+). The enzyme catalyses L-glutamine + H2O = L-glutamate + NH4(+). It functions in the pathway cofactor biosynthesis; pyridoxal 5'-phosphate biosynthesis. In terms of biological role, catalyzes the hydrolysis of glutamine to glutamate and ammonia as part of the biosynthesis of pyridoxal 5'-phosphate. The resulting ammonia molecule is channeled to the active site of PdxS. The chain is Pyridoxal 5'-phosphate synthase subunit PdxT from Bifidobacterium adolescentis (strain ATCC 15703 / DSM 20083 / NCTC 11814 / E194a).